A 515-amino-acid polypeptide reads, in one-letter code: 2,3-bisphosphoglycerate-independent phosphoglycerate mutase (515 aa).

Mn(2+) is bound by residues D17 and S67. S67 (phosphoserine intermediate) is an active-site residue. Substrate is bound by residues H128, 157-158, R190, R196, 262-265, and K336; these read RD and RADR. D403, H407, D444, H445, and H463 together coordinate Mn(2+).

Belongs to the BPG-independent phosphoglycerate mutase family. Monomer. Requires Mn(2+) as cofactor.

It catalyses the reaction (2R)-2-phosphoglycerate = (2R)-3-phosphoglycerate. The protein operates within carbohydrate degradation; glycolysis; pyruvate from D-glyceraldehyde 3-phosphate: step 3/5. Its function is as follows. Catalyzes the interconversion of 2-phosphoglycerate and 3-phosphoglycerate. This Acinetobacter baylyi (strain ATCC 33305 / BD413 / ADP1) protein is 2,3-bisphosphoglycerate-independent phosphoglycerate mutase.